Here is a 388-residue protein sequence, read N- to C-terminus: Glycoprotein-N-acetylgalactosamine 3-beta-galactosyltransferase 1 (388 aa).

The Cytoplasmic segment spans residues 1–12 (MAPISHYIGKTS). Residues 13 to 30 (LTTLAIGIAIGITVSNIV) form a helical; Signal-anchor for type II membrane protein membrane-spanning segment. Topologically, residues 31–388 (KFSSTQRRHF…LAQTDSKHIS (358 aa)) are lumenal. The segment at 43 to 65 (SGYIPDSPHSHGENDFVEGPDDS) is disordered. An N-linked (GlcNAc...) asparagine glycan is attached at Asn-80. A disulfide bridge connects residues Cys-95 and Cys-119. The UDP site is built by Met-98, Asn-100, Glu-142, Gly-143, Arg-144, Lys-150, and Asp-173. Asp-173 and Asp-175 together coordinate Mn(2+). A disulfide bridge connects residues Cys-238 and Cys-253. Trp-292 contacts a glycoprotein. Cys-307 and Cys-308 are joined by a disulfide. UDP is bound by residues His-316 and Tyr-317. Residue His-316 coordinates Mn(2+). The interval 344-388 (STEEQDHGSSHKDTDAMKPEGKGMEDKEDEETNISLAQTDSKHIS) is disordered. Over residues 347–368 (EQDHGSSHKDTDAMKPEGKGME) the composition is skewed to basic and acidic residues. The N-linked (GlcNAc...) asparagine glycan is linked to Asn-376.

Belongs to the glycosyltransferase 31 family. Beta3-Gal-T subfamily. In terms of assembly, homodimer; disulfide-linked. The cofactor is Mn(2+).

It localises to the membrane. The catalysed reaction is an N-acetyl-alpha-D-galactosaminyl derivative + UDP-alpha-D-galactose = a beta-D-galactosyl-(1-&gt;3)-N-acetyl-alpha-D-galactosaminyl derivative + UDP + H(+). It functions in the pathway protein modification; protein glycosylation. Glycosyltransferase that generates the core 1 O-glycan Gal-beta1-3GalNAc-alpha1-Ser/Thr (T antigen), which is a precursor for many extended O-glycans in glycoproteins. The protein is Glycoprotein-N-acetylgalactosamine 3-beta-galactosyltransferase 1 of Biomphalaria glabrata (Bloodfluke planorb).